An 89-amino-acid polypeptide reads, in one-letter code: Small ribosomal subunit protein bS20 (89 aa).

This sequence belongs to the bacterial ribosomal protein bS20 family.

Binds directly to 16S ribosomal RNA. The protein is Small ribosomal subunit protein bS20 of Helicobacter acinonychis (strain Sheeba).